The primary structure comprises 69 residues: Guanine nucleotide-binding protein G(I)/G(S)/G(O) subunit gamma-T2 (69 aa).

At cysteine 66 the chain carries Cysteine methyl ester. Cysteine 66 carries S-farnesyl cysteine lipidation. A propeptide spans 67–69 (LIS) (removed in mature form).

The protein belongs to the G protein gamma family. G proteins are composed of 3 units, alpha, beta and gamma. As to expression, retinal cones.

The protein resides in the cell membrane. Its function is as follows. Guanine nucleotide-binding proteins (G proteins) are involved as a modulator or transducer in various transmembrane signaling systems. The beta and gamma chains are required for the GTPase activity, for replacement of GDP by GTP, and for G protein-effector interaction. This is Guanine nucleotide-binding protein G(I)/G(S)/G(O) subunit gamma-T2 (GNGT2) from Homo sapiens (Human).